The sequence spans 619 residues: Tyrosine-protein kinase ZAP-70 (619 aa).

One can recognise an SH2 1 domain in the interval 10 to 102 (FFYGSISRAE…GLPCNLRKPC (93 aa)). Residues 103-162 (NRPSGLEPQPGVFDCLRDAMVRDYVRQTWKLEGEALEQAIISQAPQVEKLIATTAHERMP) form an interdomain A region. The SH2 2 domain occupies 163 to 254 (WYHSSLTREE…GLIYCLKEAC (92 aa)). Tyr-248 carries the post-translational modification Phosphotyrosine. Residues 255-337 (PNSSASNASG…KKLFLKRDNL (83 aa)) are interdomain B. Residues 260–309 (SNASGAAAPTLPAHPSTLTHPQRRIDTLNSDGYTPEPARITSPDKPRPMP) are disordered. Ser-289 bears the Phosphoserine mark. Tyr-292 bears the Phosphotyrosine mark. The residue at position 315 (Tyr-315) is a Phosphotyrosine; by LCK. At Tyr-319 the chain carries Phosphotyrosine. The Protein kinase domain maps to 338–600 (LIADIELGCG…QRMRACYYSL (263 aa)). ATP-binding positions include 345 to 352 (GCGNFGSV) and Lys-369. Asp-461 (proton acceptor) is an active-site residue. Phosphotyrosine is present on residues Tyr-492 and Tyr-493. A Glycyl lysine isopeptide (Lys-Gly) (interchain with G-Cter in ubiquitin) cross-link involves residue Lys-544. An N6-acetyllysine modification is found at Lys-603.

It belongs to the protein kinase superfamily. Tyr protein kinase family. SYK/ZAP-70 subfamily. In terms of assembly, interacts with CD247/CD3Z; this interaction docks ZAP70 at the stimulated TCR. Interacts with NFAM1. Interacts with adapter protein SLA; this interaction negatively regulates T-cell receptor signaling. Interacts with FCRL3. Interacts with VAV1. Interacts with CBL; this interaction promotes ubiquitination, internalization and subsequent degradation of CD247/CD3Z. Identified in a complex with CBL and UBE2L3. Interacts with SHB. Interacts with adapter protein SLA2; this interaction negatively regulates T-cell receptor signaling. Interacts with CBLB. Interacts (via SH2 domains) with RHOH; this interaction regulates ZAP70 subcellular localization. Interacts with DEF6. Interacts (ubiquitinated form) with OTUD7B and UBASH3B. Post-translationally, phosphorylated on tyrosine residues upon T-cell antigen receptor (TCR) stimulation. Phosphorylation of Tyr-315 and Tyr-319 are essential for ZAP70 positive function on T-lymphocyte activation whereas Tyr-292 has a negative regulatory role. Within the C-terminal kinase domain, Tyr-492 and Tyr-493 are phosphorylated after TCR induction, Tyr-492 playing a negative regulatory role and Tyr-493 a positive. Tyr-493 is dephosphorylated by PTN22. Ubiquitinated in response to T cell activation. Deubiquitinated by OTUD7B. Expressed in T- and natural killer cells. Also present in early thymocytes and pro/pre B-cells.

It localises to the cytoplasm. The protein localises to the cell membrane. It carries out the reaction L-tyrosyl-[protein] + ATP = O-phospho-L-tyrosyl-[protein] + ADP + H(+). Its activity is regulated as follows. Activated by phosphorylation at Tyr-493 in the activation loop. Inhibited by staurosporine. Tyrosine kinase that plays an essential role in regulation of the adaptive immune response. Regulates motility, adhesion and cytokine expression of mature T-cells, as well as thymocyte development. Also contributes to the development and activation of primary B-lymphocytes. When antigen presenting cells (APC) activate T-cell receptor (TCR), a serie of phosphorylations lead to the recruitment of ZAP70 to the doubly phosphorylated TCR component CD247/CD3Z through ITAM motif at the plasma membrane. This recruitment serves to localization to the stimulated TCR and to relieve its autoinhibited conformation. Release of ZAP70 active conformation is further stabilized by phosphorylation mediated by LCK. Subsequently, ZAP70 phosphorylates at least 2 essential adapter proteins: LAT and LCP2. In turn, a large number of signaling molecules are recruited and ultimately lead to lymphokine production, T-cell proliferation and differentiation. Furthermore, ZAP70 controls cytoskeleton modifications, adhesion and mobility of T-lymphocytes, thus ensuring correct delivery of effectors to the APC. ZAP70 is also required for TCR-CD247/CD3Z internalization and degradation through interaction with the E3 ubiquitin-protein ligase CBL and adapter proteins SLA and SLA2. Thus, ZAP70 regulates both T-cell activation switch on and switch off by modulating TCR expression at the T-cell surface. During thymocyte development, ZAP70 promotes survival and cell-cycle progression of developing thymocytes before positive selection (when cells are still CD4/CD8 double negative). Additionally, ZAP70-dependent signaling pathway may also contribute to primary B-cells formation and activation through B-cell receptor (BCR). This chain is Tyrosine-protein kinase ZAP-70 (ZAP70), found in Homo sapiens (Human).